The sequence spans 424 residues: Neurotensin receptor type 1 (424 aa).

Topologically, residues Met1–Thr67 are extracellular. N-linked (GlcNAc...) asparagine glycosylation is found at Asn4, Asn38, and Asn42. The helical transmembrane segment at Ala68 to Leu88 threads the bilayer. Residues Ala89–His102 lie on the Cytoplasmic side of the membrane. A helical membrane pass occupies residues Tyr103–Val122. Residues Glu123–Arg142 are Extracellular-facing. Cys141 and Cys224 are disulfide-bonded. The chain crosses the membrane as a helical span at residues Gly143–Val164. Residues Glu165–Arg184 lie on the Cytoplasmic side of the membrane. Residues Thr185–Phe205 traverse the membrane as a helical segment. At Thr206–Lys234 the chain is on the extracellular side. An N-linked (GlcNAc...) asparagine glycan is attached at Asn211. Residues Val235 to Ile259 form a helical membrane-spanning segment. Topologically, residues Ala260 to Leu308 are cytoplasmic. The helical transmembrane segment at Val309 to Met330 threads the bilayer. The neurotensin binding stretch occupies residues Val326–Tyr349. The Extracellular portion of the chain corresponds to Phe331–His348. The chain crosses the membrane as a helical span at residues Tyr349–Tyr369. At Asn370–Tyr424 the chain is on the cytoplasmic side. 2 S-palmitoyl cysteine lipidation sites follow: Cys386 and Cys388. The tract at residues Arg398–Tyr424 is disordered. Residues Arg403–Tyr424 are compositionally biased toward polar residues.

It belongs to the G-protein coupled receptor 1 family. Neurotensin receptor subfamily. NTSR1 sub-subfamily. Interacts (palmitoylated form) with GNA11. In terms of processing, N-glycosylated. Palmitoylated; this is required for normal localization at membrane rafts and normal GNA11-mediated activation of down-stream signaling cascades. The palmitoylation level increases in response to neurotensin treatment.

The protein resides in the cell membrane. It is found in the membrane raft. Its function is as follows. G-protein coupled receptor for the tridecapeptide neurotensin (NTS). Signaling is effected via G proteins that activate a phosphatidylinositol-calcium second messenger system. Signaling leads to the activation of downstream MAP kinases and protects cells against apoptosis. In Mus musculus (Mouse), this protein is Neurotensin receptor type 1 (Ntsr1).